Consider the following 207-residue polypeptide: MANYDVLKVDGSKSGSVELNDAVFAIEPNNSVLFEAINLQRASLRQGTHAVKNRSAVRGGGRKPWRQKGTGRARQGTIRAPQWRGGGVVFGPTPRSYAYKMPKKMRRLALRSALSFKVQENSFTIVDTFGFEAPKTKEFKNVLTTLEQPKKVLVVTENEDVNVELSARNIPGVQVTTAQGLNVLDLTSADSVIITEAAAKKVEEVLA.

Residues 55 to 75 form a disordered region; the sequence is SAVRGGGRKPWRQKGTGRARQ. Residues 60–71 show a composition bias toward basic residues; that stretch reads GGRKPWRQKGTG.

This sequence belongs to the universal ribosomal protein uL4 family. Part of the 50S ribosomal subunit.

Functionally, one of the primary rRNA binding proteins, this protein initially binds near the 5'-end of the 23S rRNA. It is important during the early stages of 50S assembly. It makes multiple contacts with different domains of the 23S rRNA in the assembled 50S subunit and ribosome. In terms of biological role, forms part of the polypeptide exit tunnel. The polypeptide is Large ribosomal subunit protein uL4 (Staphylococcus epidermidis (strain ATCC 35984 / DSM 28319 / BCRC 17069 / CCUG 31568 / BM 3577 / RP62A)).